Consider the following 232-residue polypeptide: N-(5'-phosphoribosyl)anthranilate isomerase (232 aa).

This sequence belongs to the TrpF family.

The enzyme catalyses N-(5-phospho-beta-D-ribosyl)anthranilate = 1-(2-carboxyphenylamino)-1-deoxy-D-ribulose 5-phosphate. The protein operates within amino-acid biosynthesis; L-tryptophan biosynthesis; L-tryptophan from chorismate: step 3/5. The polypeptide is N-(5'-phosphoribosyl)anthranilate isomerase (TRP1) (Lipomyces starkeyi (Oleaginous yeast)).